Here is a 330-residue protein sequence, read N- to C-terminus: Probable deoxyhypusine synthase (330 aa).

The interval 1 to 25 (MTGDDADETHENVVPGSDEDLDTPD) is disordered. Lysine 298 serves as the catalytic Nucleophile.

It belongs to the deoxyhypusine synthase family. NAD(+) is required as a cofactor.

It carries out the reaction [eIF5A protein]-L-lysine + spermidine = [eIF5A protein]-deoxyhypusine + propane-1,3-diamine. The protein operates within protein modification; eIF5A hypusination. In terms of biological role, catalyzes the NAD-dependent oxidative cleavage of spermidine and the subsequent transfer of the butylamine moiety of spermidine to the epsilon-amino group of a specific lysine residue of the eIF-5A precursor protein to form the intermediate deoxyhypusine residue. The chain is Probable deoxyhypusine synthase from Halobacterium salinarum (strain ATCC 29341 / DSM 671 / R1).